The primary structure comprises 117 residues: MIDKIKSNARDLRRNLTLQERKLWRYLRSRRFSDFKFRRQHPVGSYILDFACCSARVVVELDGGQHDLAVAYDSRRTSWLESQGWTVLRFWNNEIDCNEETVLENILQELNRRSPSP.

To H.influenzae HI_1162 and to HI_0925.

This is an uncharacterized protein from Escherichia coli (strain K12).